An 855-amino-acid chain; its full sequence is tRNA(Met) cytidine acetyltransferase TmcA (855 aa).

ATP-binding positions include Q260, 286 to 295 (GRGKSALLGI), and R438. The N-acetyltransferase domain maps to 480-663 (PDLRYWFEDP…GEYSVAVIRP (184 aa)). Acetyl-CoA is bound by residues 590-592 (IAT), 597-603 (MRHGLGS), E630, and R637.

The protein belongs to the RNA cytidine acetyltransferase family. TmcA subfamily.

It localises to the cytoplasm. The enzyme catalyses cytidine(34) in elongator tRNA(Met) + acetyl-CoA + ATP + H2O = N(4)-acetylcytidine(34) in elongator tRNA(Met) + ADP + phosphate + CoA + H(+). Catalyzes the formation of N(4)-acetylcytidine (ac(4)C) at the wobble position of tRNA(Met), by using acetyl-CoA as an acetyl donor and ATP (or GTP). The polypeptide is tRNA(Met) cytidine acetyltransferase TmcA (Methanopyrus kandleri (strain AV19 / DSM 6324 / JCM 9639 / NBRC 100938)).